The sequence spans 422 residues: MISQFEIIGDNKIGVLPKQVDQLQMCRDIAASKDLQENDSSFMLVDLDKIIERFQLWKRELPMIEPFYAVKCNTDLVLIRILASLGCGFDCASKDEIDIVMGTGVSAERIIYANPCKTRSFIAHAMDRDVKMMTFDNPEELLKIAKLHPNAEMILRIAVSDPTATCPLNLKFGADPIIAAPQLLKTASEEGINVVGISFHVGSGCNDASAYRNALQHAKNLCEIGEGLGFKMDIIDMGGGFPGAEHHNPFEKIAETIRDALDEFFPDTNKRLIAEPGRFFAAGPFSLVANIIHATEVPASKITKDPKDCADHGYMYYINDGVYGSFNCILFDHAHPIGSPLFDTDRNEKFMSTIWGPTCDSLDLVEDKKLMPKMNVGEWLYYPDMGAYTLAAATTFNGFSKPVPMYVMSEEMWESIRDSTHV.

The residue at position 71 (lysine 71) is an N6-(pyridoxal phosphate)lysine. Residues serine 203, glycine 240, and 275-278 (EPGR) contribute to the pyridoxal 5'-phosphate site. Residue 331–332 (FD) participates in substrate binding. Catalysis depends on cysteine 359, which acts as the Proton donor; shared with dimeric partner. Aspartate 360 contacts substrate. Tyrosine 388 serves as a coordination point for pyridoxal 5'-phosphate.

This sequence belongs to the Orn/Lys/Arg decarboxylase class-II family. In terms of assembly, homodimer. Only the dimer is catalytically active, as the active sites are constructed of residues from both monomers. Pyridoxal 5'-phosphate is required as a cofactor.

The enzyme catalyses L-ornithine + H(+) = putrescine + CO2. The protein operates within amine and polyamine biosynthesis; putrescine biosynthesis via L-ornithine pathway; putrescine from L-ornithine: step 1/1. Inhibited by antizyme (AZ) in response to polyamine levels. AZ inhibits the assembly of the functional homodimer by binding to ODC monomers and targeting them for ubiquitin-independent proteolytic destruction by the 26S proteasome. Functionally, catalyzes the first and rate-limiting step of polyamine biosynthesis that converts ornithine into putrescine, which is the precursor for the polyamines, spermidine and spermine. Polyamines are essential for cell proliferation and are implicated in cellular processes, ranging from DNA replication to apoptosis. This is Ornithine decarboxylase from Caenorhabditis elegans.